We begin with the raw amino-acid sequence, 384 residues long: Probable E3 ubiquitin-protein ligase rnf113 (384 aa).

The span at 1–11 (MDLFRKPKKRN) shows a compositional bias: basic residues. The disordered stretch occupies residues 1 to 96 (MDLFRKPKKR…GPSGPRDQGA (96 aa)). The span at 42–52 (PMVQSTKQLDA) shows a compositional bias: polar residues. Residues 60–71 (SSDDSDDSDDNQ) show a composition bias toward acidic residues. The C3H1-type zinc finger occupies 175–203 (DFAPDICKDYKETGFCTFGDSCKFVHDRS). The segment at 241 to 279 (CFICGNPFVDPIVTKCKHYFCTGCALKSFQKSSKCPICQ) adopts an RING-type zinc-finger fold. The disordered stretch occupies residues 299 to 384 (KKQQQKQEAE…ESDDDDAEKD (86 aa)). 2 stretches are compositionally biased toward basic and acidic residues: residues 303-312 (QKQEAEKQEE) and 320-334 (EKPHECDDHHHHDHE). Over residues 351-384 (EKSDEEQEIMMEDVEGLEGGENDSESDDDDAEKD) the composition is skewed to acidic residues.

It carries out the reaction S-ubiquitinyl-[E2 ubiquitin-conjugating enzyme]-L-cysteine + [acceptor protein]-L-lysine = [E2 ubiquitin-conjugating enzyme]-L-cysteine + N(6)-ubiquitinyl-[acceptor protein]-L-lysine.. It functions in the pathway protein modification; protein ubiquitination. Functionally, may function as E3 ubiquitin-protein ligase that catalyzes the transfer of ubiquitin onto target proteins. May play a role in DNA repair via its role in the synthesis of 'Lys-63'-linked polyubiquitin chains that recruit proteins involved in repair to sites of DNA damage by alkylating agents. The polypeptide is Probable E3 ubiquitin-protein ligase rnf113 (rnf-113) (Caenorhabditis elegans).